The primary structure comprises 349 residues: Galactose-1-phosphate uridylyltransferase (349 aa).

29-32 (RAKR) is a binding site for UDP-alpha-D-glucose. Zn(2+)-binding residues include cysteine 53 and cysteine 56. 78–79 (ND) provides a ligand contact to UDP-alpha-D-glucose. Histidine 116 is a Zn(2+) binding site. Residues asparagine 154 and 160–162 (GCS) each bind UDP-alpha-D-glucose. Histidine 165 serves as a coordination point for Zn(2+). Histidine 167 serves as the catalytic Tele-UMP-histidine intermediate. Position 169 (glutamine 169) interacts with UDP-alpha-D-glucose. Glutamate 183, histidine 282, histidine 297, and histidine 299 together coordinate Fe cation. UDP-alpha-D-glucose contacts are provided by residues 312 to 313 (KF), 317 to 318 (YE), and glutamine 324.

Belongs to the galactose-1-phosphate uridylyltransferase type 1 family. Zn(2+) serves as cofactor.

It catalyses the reaction alpha-D-galactose 1-phosphate + UDP-alpha-D-glucose = alpha-D-glucose 1-phosphate + UDP-alpha-D-galactose. It functions in the pathway carbohydrate metabolism; galactose metabolism. The chain is Galactose-1-phosphate uridylyltransferase (galT) from Haemophilus influenzae (strain ATCC 51907 / DSM 11121 / KW20 / Rd).